The following is a 76-amino-acid chain: uncharacterized protein (76 aa).

This is an uncharacterized protein from Acidianus bottle-shaped virus (isolate Italy/Pozzuoli) (ABV).